The following is a 148-amino-acid chain: Ubiquitin-conjugating enzyme E2 8 (148 aa).

In terms of domain architecture, UBC core spans 1–147 (MASKRILKEL…ARNWTQKYAM (147 aa)). Residue Cys-85 is the Glycyl thioester intermediate of the active site.

The protein belongs to the ubiquitin-conjugating enzyme family. In terms of assembly, interacts with CIP8, CHIP, NLA and XERICO. Highest expression in young stems, old leaves. Lowest levels in floral buds, anthers and young leaves.

It catalyses the reaction S-ubiquitinyl-[E1 ubiquitin-activating enzyme]-L-cysteine + [E2 ubiquitin-conjugating enzyme]-L-cysteine = [E1 ubiquitin-activating enzyme]-L-cysteine + S-ubiquitinyl-[E2 ubiquitin-conjugating enzyme]-L-cysteine.. Its pathway is protein modification; protein ubiquitination. Its function is as follows. Accepts the ubiquitin from the E1 complex and catalyzes its covalent attachment to other proteins. Mediates the selective degradation of short-lived and abnormal proteins. The protein is Ubiquitin-conjugating enzyme E2 8 (UBC8) of Arabidopsis thaliana (Mouse-ear cress).